Here is a 404-residue protein sequence, read N- to C-terminus: Deoxyguanosinetriphosphate triphosphohydrolase-like protein (404 aa).

The disordered stretch occupies residues 1 to 32 (MAVGMAAPHATYASDPARSRGRLFDEPPSKTR). Residues 22–32 (RLFDEPPSKTR) show a composition bias toward basic and acidic residues. The HD domain maps to 69–217 (RLTHTLEVAQ…AAIADDIAYD (149 aa)).

It belongs to the dGTPase family. Type 2 subfamily.

This Nitrobacter hamburgensis (strain DSM 10229 / NCIMB 13809 / X14) protein is Deoxyguanosinetriphosphate triphosphohydrolase-like protein.